The following is a 120-amino-acid chain: MEEPEMQLKGKKVTDKFTESVYVLANEPSVALYRLQEHVRRSLPELAQHKADMQRWEEQSQGAIYTVEYACSAVKSLVDSSVYFRSVEGLLKQAISIRDHMNTSAQGHSQEKLSPPPSLA.

The segment at 101–120 (MNTSAQGHSQEKLSPPPSLA) is disordered. S109 is modified (phosphoserine).

The protein belongs to the BORCS8 family. Component of the BLOC-one-related complex (BORC) which is composed of BLOC1S1, BLOC1S2, BORCS5, BORCS6, BORCS7, BORCS8, KXD1 and SNAPIN.

The protein resides in the lysosome membrane. In terms of biological role, as part of the BLOC-one-related complex (BORC), it plays a role in the movement and localization of lysosomes at the cell periphery. Associated with the cytosolic face of lysosomes, BORC recruits ARL8B to the lysosomal membrane and couples lysosomes to microtubule plus-end-directed kinesin motors, driving lysosome movement toward the cell periphery. The protein is BLOC-1-related complex subunit 8 of Mus musculus (Mouse).